Consider the following 97-residue polypeptide: Histone H1.C2 (97 aa).

The disordered stretch occupies residues 24-97; that stretch reads AAVPPKKAAP…KKAVKKAPKK (74 aa). A compositionally biased stretch (basic residues) spans 31 to 97; that stretch reads AAPKKAVAKK…KKAVKKAPKK (67 aa).

It localises to the nucleus. The protein resides in the chromosome. In Trypanosoma cruzi, this protein is Histone H1.C2.